Reading from the N-terminus, the 538-residue chain is MVAYRFLTLISLGLGSHCVSALQYGYNQLSTHKDPAVVAGAFPAINGTHLRSPAFTSPGTVSRGFSDGTSGPTRDETMEGFMRRLARSNSWMAYHEAGFKSEEGRKFPYMYLSASSSSVENPSSRKLRVWLQGGVHGNEPAGDQSMLVLLGDLAANQKWAAKLLEKMDILVLPRYNPDGVFYFQRYLATNFDPNRDHLKLARQQTRDIKELFAKFSPHIATDMHEFTAGRAFGPKKDFIYAADALFSAAKNLNIDEGIRQLSEKLFAKRMGKDIEAAGLRWDPYITLGESSSSKLLLREAGTDAKIGRNAMGLSQCVVFLCETRGIGIADQHFERRTLSGLVMAKSVLQTAVDNFDEVYNTIERGIRRFTNSRNDIVLTDKSPIIERTFGMLNTTDASLFDYPIDFATTTPAEPVLTRSRPRAYLIPPSWPDIVKRLEVFGVKADKLPYSYVGPVEALNVTSVTFDKEFYEGVVTTTVETKLVERSIRLPPGSYLVKTNQKNAALAFVALEPENIDSFASFGIIPVNTGDQYPIFRLK.

Positions 1–21 (MVAYRFLTLISLGLGSHCVSA) are cleaved as a signal peptide. The N-linked (GlcNAc...) asparagine glycan is linked to asparagine 46. A disordered region spans residues 53–76 (PAFTSPGTVSRGFSDGTSGPTRDE). Residues 71–351 (GPTRDETMEG…VMAKSVLQTA (281 aa)) enclose the Peptidase M14 domain. 3 residues coordinate Zn(2+): histidine 136, glutamate 139, and histidine 224. Catalysis depends on glutamate 322, which acts as the Proton donor/acceptor. N-linked (GlcNAc...) asparagine glycosylation is found at asparagine 393 and asparagine 459.

The protein belongs to the peptidase M14 family. Requires Zn(2+) as cofactor.

The protein resides in the secreted. Its function is as follows. Extracellular metalloprotease that contributes to pathogenicity. The polypeptide is Carboxypeptidase 2 (MCPB) (Trichophyton rubrum (Athlete's foot fungus)).